The chain runs to 315 residues: Acetyl-coenzyme A carboxylase carboxyl transferase subunit alpha (315 aa).

In terms of domain architecture, CoA carboxyltransferase C-terminal spans 40–293 (LQDKSKTLTE…REELSSQLAM (254 aa)).

Belongs to the AccA family. In terms of assembly, acetyl-CoA carboxylase is a heterohexamer composed of biotin carboxyl carrier protein (AccB), biotin carboxylase (AccC) and two subunits each of ACCase subunit alpha (AccA) and ACCase subunit beta (AccD).

It localises to the cytoplasm. The enzyme catalyses N(6)-carboxybiotinyl-L-lysyl-[protein] + acetyl-CoA = N(6)-biotinyl-L-lysyl-[protein] + malonyl-CoA. It functions in the pathway lipid metabolism; malonyl-CoA biosynthesis; malonyl-CoA from acetyl-CoA: step 1/1. Functionally, component of the acetyl coenzyme A carboxylase (ACC) complex. First, biotin carboxylase catalyzes the carboxylation of biotin on its carrier protein (BCCP) and then the CO(2) group is transferred by the carboxyltransferase to acetyl-CoA to form malonyl-CoA. This Pseudomonas syringae pv. syringae (strain B728a) protein is Acetyl-coenzyme A carboxylase carboxyl transferase subunit alpha.